Reading from the N-terminus, the 607-residue chain is TOM1-like protein 8 (607 aa).

One can recognise a VHS domain in the interval 9-138 (ATSDMLIGPD…ELLRAGIVFP (130 aa)). Positions 141 to 175 (PQITPSSGQNGPSTRYPQNSRNARQEAIDTSTESE) are disordered. A GAT domain is found at 175 to 263 (EFPTLSLTEI…LLAKHEAIAS (89 aa)). S297 carries the post-translational modification Phosphoserine. A compositionally biased stretch (polar residues) spans 355–379 (NNCESSTPTSNPHANHQKVQQNYSN). Disordered stretches follow at residues 355–393 (NNCESSTPTSNPHANHQKVQQNYSNGFGPGHQEQSYYGQ), 407–460 (QPSS…SPTH), and 555–582 (DNGNNNTNPYQVSSHQPPPMMKPMNKKP). S410 bears the Phosphoserine mark. The segment covering 448–460 (QSPSSSPQYSPTH) has biased composition (low complexity). A compositionally biased stretch (polar residues) spans 555-569 (DNGNNNTNPYQVSSH).

This sequence belongs to the TOM1 family. As to expression, specifically expressed in siliques and flowers.

It localises to the membrane. In terms of biological role, might contribute to the loading of the ESCRT machinery. In Arabidopsis thaliana (Mouse-ear cress), this protein is TOM1-like protein 8.